The primary structure comprises 241 residues: Leucyl/phenylalanyl-tRNA--protein transferase (241 aa).

It belongs to the L/F-transferase family.

Its subcellular location is the cytoplasm. It carries out the reaction N-terminal L-lysyl-[protein] + L-leucyl-tRNA(Leu) = N-terminal L-leucyl-L-lysyl-[protein] + tRNA(Leu) + H(+). It catalyses the reaction N-terminal L-arginyl-[protein] + L-leucyl-tRNA(Leu) = N-terminal L-leucyl-L-arginyl-[protein] + tRNA(Leu) + H(+). The catalysed reaction is L-phenylalanyl-tRNA(Phe) + an N-terminal L-alpha-aminoacyl-[protein] = an N-terminal L-phenylalanyl-L-alpha-aminoacyl-[protein] + tRNA(Phe). Its function is as follows. Functions in the N-end rule pathway of protein degradation where it conjugates Leu, Phe and, less efficiently, Met from aminoacyl-tRNAs to the N-termini of proteins containing an N-terminal arginine or lysine. The protein is Leucyl/phenylalanyl-tRNA--protein transferase of Neisseria meningitidis serogroup A / serotype 4A (strain DSM 15465 / Z2491).